The sequence spans 156 residues: CASP-like protein 5C1 (156 aa).

At 1-21 the chain is on the cytoplasmic side; sequence MENRERAGAGAVGSAGSLGLR. Residues 22–42 form a helical membrane-spanning segment; that stretch reads VGQAVFSSASLLFMSVGVEFF. Over 43-46 the chain is Extracellular; sequence SYTA. The chain crosses the membrane as a helical span at residues 47-67; the sequence is FCFLVTIMGLVIPWSCTLAMI. At 68 to 81 the chain is on the cytoplasmic side; that stretch reads DVYSILVGCPLRVP. A helical transmembrane segment spans residues 82 to 102; sequence GVMVIVVIGDWVLAILSLAAA. Residues 103–132 lie on the Extracellular side of the membrane; sequence SSSAAVIDLLLQFHGSHCSPRFCGRYQLSA. A helical transmembrane segment spans residues 133–153; it reads MMAFLSWFLTAASSLFNLWFI. Residues 154-156 lie on the Cytoplasmic side of the membrane; that stretch reads ASR.

Belongs to the Casparian strip membrane proteins (CASP) family. In terms of assembly, homodimer and heterodimers.

The protein resides in the cell membrane. This is CASP-like protein 5C1 from Oryza sativa subsp. japonica (Rice).